The chain runs to 299 residues: ATP phosphoribosyltransferase (299 aa).

This sequence belongs to the ATP phosphoribosyltransferase family. Long subfamily. Mg(2+) serves as cofactor.

The protein resides in the cytoplasm. It carries out the reaction 1-(5-phospho-beta-D-ribosyl)-ATP + diphosphate = 5-phospho-alpha-D-ribose 1-diphosphate + ATP. The protein operates within amino-acid biosynthesis; L-histidine biosynthesis; L-histidine from 5-phospho-alpha-D-ribose 1-diphosphate: step 1/9. Its activity is regulated as follows. Feedback inhibited by histidine. Catalyzes the condensation of ATP and 5-phosphoribose 1-diphosphate to form N'-(5'-phosphoribosyl)-ATP (PR-ATP). Has a crucial role in the pathway because the rate of histidine biosynthesis seems to be controlled primarily by regulation of HisG enzymatic activity. The sequence is that of ATP phosphoribosyltransferase from Baumannia cicadellinicola subsp. Homalodisca coagulata.